The primary structure comprises 408 residues: Arginine biosynthesis bifunctional protein ArgJ (408 aa).

Substrate is bound by residues T162, K188, T199, E280, N403, and S408. T199 serves as the catalytic Nucleophile.

The protein belongs to the ArgJ family. In terms of assembly, heterotetramer of two alpha and two beta chains.

The protein resides in the cytoplasm. It catalyses the reaction N(2)-acetyl-L-ornithine + L-glutamate = N-acetyl-L-glutamate + L-ornithine. The catalysed reaction is L-glutamate + acetyl-CoA = N-acetyl-L-glutamate + CoA + H(+). It functions in the pathway amino-acid biosynthesis; L-arginine biosynthesis; L-ornithine and N-acetyl-L-glutamate from L-glutamate and N(2)-acetyl-L-ornithine (cyclic): step 1/1. It participates in amino-acid biosynthesis; L-arginine biosynthesis; N(2)-acetyl-L-ornithine from L-glutamate: step 1/4. In terms of biological role, catalyzes two activities which are involved in the cyclic version of arginine biosynthesis: the synthesis of N-acetylglutamate from glutamate and acetyl-CoA as the acetyl donor, and of ornithine by transacetylation between N(2)-acetylornithine and glutamate. The protein is Arginine biosynthesis bifunctional protein ArgJ of Ruegeria pomeroyi (strain ATCC 700808 / DSM 15171 / DSS-3) (Silicibacter pomeroyi).